A 446-amino-acid chain; its full sequence is Sorting nexin-30 (446 aa).

Residues 1–18 (MSGSSTPKSLPTSGQQSL) are compositionally biased toward polar residues. The segment at 1-84 (MSGSSTPKSL…SSPASSSSLL (84 aa)) is disordered. Low complexity predominate over residues 70–84 (TPADTSSPASSSSLL). The 122-residue stretch at 98–219 (RDLFVTVDDP…VFLTAKDLNS (122 aa)) folds into the PX domain. Positions 141, 143, 171, and 185 each coordinate a 1,2-diacyl-sn-glycero-3-phospho-(1D-myo-inositol-3-phosphate). Positions 243–446 (KLRNRPVEFA…PLLQDKQEPK (204 aa)) constitute a BAR domain.

The protein belongs to the sorting nexin family.

Its subcellular location is the early endosome membrane. Involved in the regulation of endocytosis and in several stages of intracellular trafficking. Together with snx4, involved in autophagosome assembly. This is Sorting nexin-30 (snx30) from Xenopus tropicalis (Western clawed frog).